The primary structure comprises 124 residues: Small ribosomal subunit protein eS6 (124 aa).

It belongs to the eukaryotic ribosomal protein eS6 family.

The chain is Small ribosomal subunit protein eS6 from Methanococcus maripaludis (strain C7 / ATCC BAA-1331).